The primary structure comprises 924 residues: Type II inositol 3,4-bisphosphate 4-phosphatase (924 aa).

Residues 1-13 (MEIKEEGASEEGQ) show a composition bias toward basic and acidic residues. Disordered stretches follow at residues 1–25 (MEIK…SDPG), 481–516 (ILKK…HSDY), and 546–569 (DGGS…DAIP). A C2 domain is found at 23–165 (DPGDCQFTSI…LKSKEQLLVL (143 aa)).

This sequence belongs to the inositol 3,4-bisphosphate 4-phosphatase family.

The enzyme catalyses a 1,2-diacyl-sn-glycero-3-phospho-(1D-myo-inositol-3,4-bisphosphate) + H2O = a 1,2-diacyl-sn-glycero-3-phospho-(1D-myo-inositol-3-phosphate) + phosphate. It catalyses the reaction 1D-myo-inositol 1,3,4-trisphosphate + H2O = 1D-myo-inositol 1,3-bisphosphate + phosphate. The catalysed reaction is 1D-myo-inositol 3,4-bisphosphate + H2O = 1D-myo-inositol 3-phosphate + phosphate. It functions in the pathway signal transduction; phosphatidylinositol signaling pathway. Its activity is regulated as follows. Strongly inhibited by inositol hexakisphosphate. Functionally, catalyzes the hydrolysis of the 4-position phosphate of phosphatidylinositol 3,4-bisphosphate, inositol 1,3,4-trisphosphate and inositol 3,4-bisphosphate. Plays a role in the late stages of macropinocytosis by dephosphorylating phosphatidylinositol 3,4-bisphosphate in membrane ruffles. Antagonizes the PI3K-AKT/PKB signaling pathway by dephosphorylating phosphoinositides and thereby modulating cell cycle progression and cell survival. The polypeptide is Type II inositol 3,4-bisphosphate 4-phosphatase (INPP4B) (Pongo abelii (Sumatran orangutan)).